The primary structure comprises 274 residues: Elongation factor Ts (274 aa).

Residues 82 to 85 are involved in Mg(2+) ion dislocation from EF-Tu; sequence TDFV.

It belongs to the EF-Ts family.

It is found in the cytoplasm. Associates with the EF-Tu.GDP complex and induces the exchange of GDP to GTP. It remains bound to the aminoacyl-tRNA.EF-Tu.GTP complex up to the GTP hydrolysis stage on the ribosome. The sequence is that of Elongation factor Ts from Christiangramia forsetii (strain DSM 17595 / CGMCC 1.15422 / KT0803) (Gramella forsetii).